Consider the following 163-residue polypeptide: Large ribosomal subunit protein uL10 (163 aa).

It belongs to the universal ribosomal protein uL10 family. In terms of assembly, part of the ribosomal stalk of the 50S ribosomal subunit. The N-terminus interacts with L11 and the large rRNA to form the base of the stalk. The C-terminus forms an elongated spine to which L12 dimers bind in a sequential fashion forming a multimeric L10(L12)X complex.

In terms of biological role, forms part of the ribosomal stalk, playing a central role in the interaction of the ribosome with GTP-bound translation factors. This Haemophilus influenzae (strain PittGG) protein is Large ribosomal subunit protein uL10.